A 177-amino-acid chain; its full sequence is ATP synthase subunit delta (177 aa).

Belongs to the ATPase delta chain family. F-type ATPases have 2 components, F(1) - the catalytic core - and F(0) - the membrane proton channel. F(1) has five subunits: alpha(3), beta(3), gamma(1), delta(1), epsilon(1). F(0) has three main subunits: a(1), b(2) and c(10-14). The alpha and beta chains form an alternating ring which encloses part of the gamma chain. F(1) is attached to F(0) by a central stalk formed by the gamma and epsilon chains, while a peripheral stalk is formed by the delta and b chains.

Its subcellular location is the cell inner membrane. Functionally, f(1)F(0) ATP synthase produces ATP from ADP in the presence of a proton or sodium gradient. F-type ATPases consist of two structural domains, F(1) containing the extramembraneous catalytic core and F(0) containing the membrane proton channel, linked together by a central stalk and a peripheral stalk. During catalysis, ATP synthesis in the catalytic domain of F(1) is coupled via a rotary mechanism of the central stalk subunits to proton translocation. Its function is as follows. This protein is part of the stalk that links CF(0) to CF(1). It either transmits conformational changes from CF(0) to CF(1) or is implicated in proton conduction. In Shewanella sp. (strain ANA-3), this protein is ATP synthase subunit delta.